The primary structure comprises 354 residues: Protein OPG055 (354 aa).

This sequence belongs to the orthopoxvirus OPG055 family.

Stimulates increases in peripheral microtubule dynamics and may increase the motility of the infected cells, contributing to cell-to-cell spread of the virus. Seems to inhibit the signaling via the GTPase RHOA and DIAPH1/mDia. This chain is Protein OPG055 (OPG055), found in Homo sapiens (Human).